A 598-amino-acid chain; its full sequence is MRIEDFSLKNVSSSPGVYLMKDSQGVVLYVGKAKNLRNRLSSYLQKNGDSRERIPFLMKRTADIDTIVVSNETEALLLENNLIKKYQPRYNVLLKDDKTFFCLSISLQHPWPKIEAIRTRALSPSKKKQLLFGPYVSAEACYALLEVISHWFPLRTCSDREFSTRQRPCVLYEMKRCLAPCVGFCSQTEYQETLEKAILFLKGEVDTTIANLEEAIKKASQEHKFEHAAALYRTLTLIRQTMAKQHVEKFQAYDIDVLGLYRKGPLAIISVLSVYSGKLLGARHFTFPENAQEDSSLFSSFILQYYAENTRIPKQIFVPVSPDSPELPYLLNAAEPPKIRCPKTEYGKELLALAHKNAAEQAKPLNSITLPYEELQQLFKFSQYPNRIECYDNAHLQGEHNVGVYIVFEKGSFSPKQYRTFSITSHGDDLAAFEEVLTRRFRSLTTELPDLIVIDGGRNQFRRAQHILEKLNLTGIAVVSIAKESGNHSRGLQQEKLFCEAFPQGILLNPTSEILQFFQLLRDEAHRFAINRYRNKHSKAILTTKKIPGIGKTKTTHLLQKFKSWKRILSASEEELKTVQGLTKKDIQRIQEEGKRAE.

The 80-residue stretch at 13–92 (SSPGVYLMKD…IKKYQPRYNV (80 aa)) folds into the GIY-YIG domain. The region spanning 206–241 (DTTIANLEEAIKKASQEHKFEHAAALYRTLTLIRQT) is the UVR domain.

Belongs to the UvrC family. As to quaternary structure, interacts with UvrB in an incision complex.

Its subcellular location is the cytoplasm. Its function is as follows. The UvrABC repair system catalyzes the recognition and processing of DNA lesions. UvrC both incises the 5' and 3' sides of the lesion. The N-terminal half is responsible for the 3' incision and the C-terminal half is responsible for the 5' incision. The sequence is that of UvrABC system protein C from Chlamydia muridarum (strain MoPn / Nigg).